The sequence spans 376 residues: Alpha-ketoglutarate-dependent dioxygenase esdpJ (376 aa).

Fe cation contacts are provided by histidine 145 and aspartate 147. Threonine 202 provides a ligand contact to 2-oxoglutarate. Residues 234 to 260 (YNQSSQEKKSEIHVEPRGSPNNVGSDL) are disordered. The span at 239 to 249 (QEKKSEIHVEP) shows a compositional bias: basic and acidic residues. A Fe cation-binding site is contributed by histidine 335. Residues arginine 347 and arginine 351 each coordinate 2-oxoglutarate. Positions 354-376 (GVGEQPYLDPESKTRREALGEFN) are disordered. Residues 363-376 (PESKTRREALGEFN) show a composition bias toward basic and acidic residues.

The protein belongs to the TfdA dioxygenase family. The cofactor is Fe(2+).

In terms of biological role, alpha-ketoglutarate-dependent dioxygenas; part of the cluster that mediates the biosynthesis of shearones, diterpenoid pyrones (DPs) which are structurally diverse meroterpenoids consisting of a diterpene linked by a pyrone, and which may exhibit a range of bioactivities. The alpha-ketoglutarate-dependent dioxygenase esdpJ seems not to be involved in this pathway. The molecular scaffold is commonly biosynthesized by a series of enzymes including the non-reducing polyketide synthase (NR-PKS) esdpA that generates an alpha-pyrone; the prenyltransferase esdpC that attaches a geranylgeranyl pyrophosphate (GGPP) produced by the GGPP synthase (GGPPS) esdpD onto the pyrone unit; the FAD-dependent monooxygenase esdpE that converts an olefin on the diterpene unit into an epoxide; and the terpene cyclase esdpB that catalyzes the cyclization reactions to give the molecular backbone shearone A. In the modification steps, esdpF oxidizes the hydroxy group to a ketone at C-3 and esdpG then attaches hydroxy groups at both C-11 and C-12. After that, esdpI hydroxylates at C-20 and esdpH hydroxylates at C-6'. The ether bridge is generated by nucleophilic attack of the hydroxy group at C-20 to the carbonyl carbon at C-3. EsdpH can also functions prior to esdpI. The different combinations of these modification enzymes lead to the production of diverse shearone derivatives, shearone I being the end product of the pathway. The chain is Alpha-ketoglutarate-dependent dioxygenase esdpJ from Penicillium shearii (Eupenicillium shearii).